The following is a 461-amino-acid chain: tRNA modification GTPase MnmE (461 aa).

Positions 23, 84, and 123 each coordinate (6S)-5-formyl-5,6,7,8-tetrahydrofolate. Residues 219–382 (GVQVVIGGRP…LLDHLTDTVA (164 aa)) enclose the TrmE-type G domain. GTP-binding positions include 229-234 (NAGKST), 248-254 (SETPGTT), 273-276 (DTAG), and 337-340 (NKAD). Residues serine 233 and threonine 254 each coordinate Mg(2+). Position 461 (lysine 461) interacts with (6S)-5-formyl-5,6,7,8-tetrahydrofolate.

This sequence belongs to the TRAFAC class TrmE-Era-EngA-EngB-Septin-like GTPase superfamily. TrmE GTPase family. In terms of assembly, homodimer. Heterotetramer of two MnmE and two MnmG subunits. It depends on K(+) as a cofactor.

It localises to the cytoplasm. Functionally, exhibits a very high intrinsic GTPase hydrolysis rate. Involved in the addition of a carboxymethylaminomethyl (cmnm) group at the wobble position (U34) of certain tRNAs, forming tRNA-cmnm(5)s(2)U34. This Salinibacter ruber (strain DSM 13855 / M31) protein is tRNA modification GTPase MnmE.